Consider the following 135-residue polypeptide: MRHYEIVFMVHPDQSEQVAGMIERYTGVITDANGKIHRLEDWGRRQLAYPIQDLHKAHYVLMNVEATAESVEELETAFRFNDAVLRSMVMRTKGAITEASPMAKAKDERDARRAAISERSSEADEVEENAEESAE.

The disordered stretch occupies residues 98-135; that stretch reads EASPMAKAKDERDARRAAISERSSEADEVEENAEESAE. Residues 104-122 are compositionally biased toward basic and acidic residues; sequence KAKDERDARRAAISERSSE. Residues 123 to 135 show a composition bias toward acidic residues; it reads ADEVEENAEESAE.

This sequence belongs to the bacterial ribosomal protein bS6 family.

Functionally, binds together with bS18 to 16S ribosomal RNA. The polypeptide is Small ribosomal subunit protein bS6 (Shewanella amazonensis (strain ATCC BAA-1098 / SB2B)).